The primary structure comprises 472 residues: MENFKHLPEPFRIRVIEPVKRTTREYREKAILNAGMNPFLLDSEDVFIDLLTDSGTGAITQEMQAAMFRGDEAYSGSRSYHALARAVKDIFGYEYTIPTHQGRGAEQIYIPVLIKKREKEKGLDRSKMVALSNYFFDTTQGHTQINCCVAKNVYTEEAFDTGVKADFKGNFDLEKLEQAILEAGPANVPYIVSTITCNSAGGQPVSIANLKAVYEIAQRYDIPVIMDSARFAENAYFIQQRERDYRNWSIEEITREAYKYADGLAMSAKKDAMVQMGGLLCFKDESFFDVYTECRTLCVVQEGFPTYGGLEGGAMERLAVGLYDGMRQDWLAYRINQVEYLVNGLEAIGVICQQAGGHAAFVDAGKLLPHIPADQFPAHALACELYKVAGIRAVEIGSLLLGRDPATGKQHPCPAELLRLTIPRATYTQTHMDFIIEAFEKVKANARNVKGLEFTYEPPVLRHFTARLKEKA.

K270 is modified (N6-(pyridoxal phosphate)lysine).

It belongs to the beta-eliminating lyase family. In terms of assembly, homotetramer. Pyridoxal 5'-phosphate is required as a cofactor.

The enzyme catalyses L-tryptophan + H2O = indole + pyruvate + NH4(+). The protein operates within amino-acid degradation; L-tryptophan degradation via pyruvate pathway; indole and pyruvate from L-tryptophan: step 1/1. The chain is Tryptophanase (tnaA) from Vibrio cholerae serotype O1 (strain ATCC 39315 / El Tor Inaba N16961).